The following is a 332-amino-acid chain: Glycerol-3-phosphate dehydrogenase [NAD(P)+] (332 aa).

Residues Ser11, Phe12, Lys32, and Lys106 each coordinate NADPH. Residues Lys106, Gly137, and Ser139 each contribute to the sn-glycerol 3-phosphate site. An NADPH-binding site is contributed by Ala141. Sn-glycerol 3-phosphate is bound by residues Lys192, Asp245, Ser255, Arg256, and Asn257. Residue Lys192 is the Proton acceptor of the active site. Arg256 serves as a coordination point for NADPH. Residues Val280 and Glu282 each contribute to the NADPH site.

This sequence belongs to the NAD-dependent glycerol-3-phosphate dehydrogenase family.

Its subcellular location is the cytoplasm. It carries out the reaction sn-glycerol 3-phosphate + NAD(+) = dihydroxyacetone phosphate + NADH + H(+). It catalyses the reaction sn-glycerol 3-phosphate + NADP(+) = dihydroxyacetone phosphate + NADPH + H(+). The protein operates within membrane lipid metabolism; glycerophospholipid metabolism. In terms of biological role, catalyzes the reduction of the glycolytic intermediate dihydroxyacetone phosphate (DHAP) to sn-glycerol 3-phosphate (G3P), the key precursor for phospholipid synthesis. The polypeptide is Glycerol-3-phosphate dehydrogenase [NAD(P)+] (Staphylococcus epidermidis (strain ATCC 35984 / DSM 28319 / BCRC 17069 / CCUG 31568 / BM 3577 / RP62A)).